Consider the following 336-residue polypeptide: GTPase Obg (336 aa).

Residues 1 to 159 (MKFLDETKVY…KTIWLRLKLI (159 aa)) form the Obg domain. In terms of domain architecture, OBG-type G spans 160-327 (ADAGLVGLPN…ALRALRSVIA (168 aa)). Residues 166-173 (GLPNAGKS), 191-195 (FTTLH), 212-215 (DIPG), 279-282 (SQID), and 308-310 (SAV) each bind GTP. Positions 173 and 193 each coordinate Mg(2+).

This sequence belongs to the TRAFAC class OBG-HflX-like GTPase superfamily. OBG GTPase family. As to quaternary structure, monomer. It depends on Mg(2+) as a cofactor.

It localises to the cytoplasm. An essential GTPase which binds GTP, GDP and possibly (p)ppGpp with moderate affinity, with high nucleotide exchange rates and a fairly low GTP hydrolysis rate. Plays a role in control of the cell cycle, stress response, ribosome biogenesis and in those bacteria that undergo differentiation, in morphogenesis control. In Rhizobium meliloti (strain 1021) (Ensifer meliloti), this protein is GTPase Obg.